Consider the following 89-residue polypeptide: Small ribosomal subunit protein uS14 (89 aa).

Belongs to the universal ribosomal protein uS14 family. In terms of assembly, part of the 30S ribosomal subunit. Contacts proteins S3 and S10.

Binds 16S rRNA, required for the assembly of 30S particles and may also be responsible for determining the conformation of the 16S rRNA at the A site. This is Small ribosomal subunit protein uS14 from Latilactobacillus sakei subsp. sakei (strain 23K) (Lactobacillus sakei subsp. sakei).